Consider the following 861-residue polypeptide: Interleukin-12 receptor subunit beta-2 (861 aa).

An N-terminal signal peptide occupies residues 1 to 23 (MARTVCGCSWALIFIIMSLLVKA). Residues 24–622 (KIDVCKRGDV…REFCLQGKAN (599 aa)) are Extracellular-facing. Residues asparagine 48, asparagine 129, asparagine 166, and asparagine 271 are each glycosylated (N-linked (GlcNAc...) asparagine). Fibronectin type-III domains are found at residues 126–224 (QPQN…VVRP), 226–317 (PPWD…TQTP), 318–415 (EKEP…NIAD), 423–520 (APQQ…KHKA), and 521–620 (PLSG…LQGK). The WSXWS motif motif lies at 305 to 309 (WSDWS). Residues asparagine 347, asparagine 376, and asparagine 480 are each glycosylated (N-linked (GlcNAc...) asparagine). Residues 623–643 (WSTFVAPSICIAVITVGVFSM) form a helical membrane-spanning segment. Residues 644 to 861 (RCFRQKVFVL…LKMGCGSLML (218 aa)) lie on the Cytoplasmic side of the membrane. Residues 662–670 (CSREIPDPA) carry the Box 1 motif motif. The segment at 718–761 (FRRPHHPNWPGKGQRLQGRHASEEDTGSSASSPPPPRALTAETG) is disordered. At tyrosine 800 the chain carries Phosphotyrosine.

Belongs to the type I cytokine receptor family. Type 2 subfamily. As to quaternary structure, heterodimer/heterooligomer; disulfide-linked. The functional high affinity IL12 receptor is composed of I12RB1 and IL12RB2. Il12RB2 binds JAK2 (via its N-terminal) through a membrane-proximal region of the cytoplasmic domain. On IL12 stimulation, phosphorylated on C-terminal tyrosine residues.

The protein resides in the membrane. Receptor for interleukin-12. This subunit is the signaling component coupling to the JAK2/STAT4 pathway. The protein is Interleukin-12 receptor subunit beta-2 (IL12RB2) of Sus scrofa (Pig).